A 381-amino-acid chain; its full sequence is 2-methylcitrate synthase 1 (381 aa).

His192 contacts substrate. His227 is an active-site residue. 260–264 (RIMGF) contributes to the CoA binding site. His266 is an active-site residue. Arg275 serves as a coordination point for substrate. Asp317 is a catalytic residue. Arg342 and Arg361 together coordinate substrate.

Belongs to the citrate synthase family. Homodimer.

The enzyme catalyses propanoyl-CoA + oxaloacetate + H2O = (2S,3S)-2-methylcitrate + CoA + H(+). It carries out the reaction oxaloacetate + acetyl-CoA + H2O = citrate + CoA + H(+). The protein operates within carbohydrate metabolism; tricarboxylic acid cycle. Catalyzes the Claisen condensation of propionyl-CoA and oxaloacetate (OAA) to yield 2-methylcitrate (2-MC) and CoA. Also catalyzes the condensation of oxaloacetate with propionyl-CoA but with a lower specificity. The chain is 2-methylcitrate synthase 1 (prpC1) from Corynebacterium glutamicum (strain ATCC 13032 / DSM 20300 / JCM 1318 / BCRC 11384 / CCUG 27702 / LMG 3730 / NBRC 12168 / NCIMB 10025 / NRRL B-2784 / 534).